Here is an 82-residue protein sequence, read N- to C-terminus: UPF0180 protein BT9727_1277 (82 aa).

The protein belongs to the UPF0180 family.

The protein is UPF0180 protein BT9727_1277 of Bacillus thuringiensis subsp. konkukian (strain 97-27).